The primary structure comprises 772 residues: A type blood N-acetyl-alpha-D-galactosamine deacetylase (772 aa).

The first 27 residues, 1–27 (MRNRRKAVSLLTGLLVTAQLFPTAALA), serve as a signal peptide directing secretion. The substrate site is built by S87 and H123. D126 lines the a divalent metal cation pocket. Positions 180 to 402 (WSKPTSDAER…WRIGYAENSF (223 aa)) are deacetylase activity. Y236 provides a ligand contact to substrate. Residue H278 coordinates a divalent metal cation. In terms of domain architecture, F5/8 type C spans 494-605 (SDDLEIAVVE…KDLVASGSDW (112 aa)). Positions 502-765 (VENPYTLIPQ…VCVSPVVDFD (264 aa)) are CBM32 carbohydrate-binding domain. Residues 515–772 (TATATSVYGG…DFDYFSYVGE (258 aa)) are not required for activity on soluble substrates.

Requires a divalent metal cation as cofactor.

It carries out the reaction an N-acetyl-alpha-D-galactosaminyl-(1-&gt;3)-[alpha-L-fucosyl-(1-&gt;2)]-beta-D-galactosyl derivative + H2O = an alpha-D-galactosaminyl-(1-&gt;3)-[alpha-L-fucosyl-(1-&gt;2)]-beta-D-galactosyl derivative + acetate. Inhibited by EDTA. In terms of biological role, one of an enzyme pair that work together to convert the A antigen to the H antigen of the O blood type, which together release galactosamine. Catalyzes the first step in the conversion, generating the substrate for the subsequent enzyme (FpGalNase, AC P0DTR5). Works on many different A antigen subtypes. Glu-90 probably activates a nucleophilic water molecule to start the deacetylation reaction. The polypeptide is A type blood N-acetyl-alpha-D-galactosamine deacetylase (Flavonifractor plautii (Fusobacterium plautii)).